The primary structure comprises 129 residues: Ribulose bisphosphate carboxylase small subunit (129 aa).

Belongs to the RuBisCO small chain family. In terms of assembly, heterohexadecamer of 8 large and 8 small subunits.

RuBisCO catalyzes two reactions: the carboxylation of D-ribulose 1,5-bisphosphate, the primary event in carbon dioxide fixation, as well as the oxidative fragmentation of the pentose substrate. Both reactions occur simultaneously and in competition at the same active site. Although the small subunit is not catalytic it is essential for maximal activity. The chain is Ribulose bisphosphate carboxylase small subunit from Cereibacter sphaeroides (Rhodobacter sphaeroides).